Here is a 167-residue protein sequence, read N- to C-terminus: Neutrophilic granule protein (167 aa).

The first 21 residues, 1–21 (MAGLWKTFVLVVALAVVSCEA), serve as a signal peptide directing secretion. The interval 122–141 (EDTQETSFNDKQDVSEKEKF) is disordered.

Belongs to the cathelicidin family. As to quaternary structure, monomer. Homodimer; disulfide-linked. In terms of tissue distribution, expressed in myeloid bone marrow cells. Expressed in neutrophilic precursors (at protein level). Expressed in myeloid bone marrow cells.

It localises to the secreted. The protein resides in the cytoplasmic granule. Its function is as follows. Acts as an inhibitor of cathepsin B (CTSB) activity. Plays a role as a negative regulator of tumor vascular development, cell invasion and metastasis. The protein is Neutrophilic granule protein of Mus musculus (Mouse).